Reading from the N-terminus, the 950-residue chain is Glycine dehydrogenase (decarboxylating) (950 aa).

Lys-698 bears the N6-(pyridoxal phosphate)lysine mark.

This sequence belongs to the GcvP family. In terms of assembly, the glycine cleavage system is composed of four proteins: P, T, L and H. The cofactor is pyridoxal 5'-phosphate.

It carries out the reaction N(6)-[(R)-lipoyl]-L-lysyl-[glycine-cleavage complex H protein] + glycine + H(+) = N(6)-[(R)-S(8)-aminomethyldihydrolipoyl]-L-lysyl-[glycine-cleavage complex H protein] + CO2. Functionally, the glycine cleavage system catalyzes the degradation of glycine. The P protein binds the alpha-amino group of glycine through its pyridoxal phosphate cofactor; CO(2) is released and the remaining methylamine moiety is then transferred to the lipoamide cofactor of the H protein. The polypeptide is Glycine dehydrogenase (decarboxylating) (Neisseria meningitidis serogroup C / serotype 2a (strain ATCC 700532 / DSM 15464 / FAM18)).